The chain runs to 461 residues: MSQGKVVQIIGAVVDLEFPQDAVPKVYDALKVTEGGLEGLVLEVQQQLGGGIVRAIAMGTTDGLRRGITAKNTGESIMVPVGKKTLGRIMDVLGNPIDEAGPIGEEEKMSIHRAAPSYEEQSNTNELLETGIKVIDLICPFAKGGKVGLFGGAGVGKTVNMMELIRNIAIEHSGYSVFAGVGERTREGNDFYHEMNDSNVLDKVSLVYGQMNEPPGNRLRVALTGLTIAEKFRDEGRDVLFFVDNIYRYTLAGTEVSALLGRMPSAVGYQPTLAEEMGVLQERITSTKTGSITSVQAVYVPADDLTDPSPATTFAHLDATVVLNRDIASLGIYPAVDPLDSTSRQLDPQVIGDEHYDTAMGVQEVLQRYKELKDIIAILGMDELSEEDKLSVSRARKIQRFLSQPFFVAEVFTGAPGKYVSLKDTIAGFKGILDGDYDDMPEQAFYMVGTIEEAVEKAKNL.

ATP is bound at residue 151-158 (GGAGVGKT).

It belongs to the ATPase alpha/beta chains family. F-type ATPases have 2 components, CF(1) - the catalytic core - and CF(0) - the membrane proton channel. CF(1) has five subunits: alpha(3), beta(3), gamma(1), delta(1), epsilon(1). CF(0) has three main subunits: a(1), b(2) and c(9-12). The alpha and beta chains form an alternating ring which encloses part of the gamma chain. CF(1) is attached to CF(0) by a central stalk formed by the gamma and epsilon chains, while a peripheral stalk is formed by the delta and b chains.

Its subcellular location is the cell inner membrane. It catalyses the reaction ATP + H2O + 4 H(+)(in) = ADP + phosphate + 5 H(+)(out). Its function is as follows. Produces ATP from ADP in the presence of a proton gradient across the membrane. The catalytic sites are hosted primarily by the beta subunits. The protein is ATP synthase subunit beta of Idiomarina loihiensis (strain ATCC BAA-735 / DSM 15497 / L2-TR).